Here is a 246-residue protein sequence, read N- to C-terminus: UDP-N-acetyl-D-mannosaminuronic acid transferase (246 aa).

This sequence belongs to the glycosyltransferase 26 family.

The catalysed reaction is UDP-N-acetyl-alpha-D-mannosaminouronate + N-acetyl-alpha-D-glucosaminyl-di-trans,octa-cis-undecaprenyl diphosphate = beta-D-ManNAcA-(1-&gt;4)-alpha-D-GlcNAc-di-trans,octa-cis-undecaprenyl diphosphate + UDP + H(+). It participates in bacterial outer membrane biogenesis; enterobacterial common antigen biosynthesis. Catalyzes the synthesis of Und-PP-GlcNAc-ManNAcA (Lipid II), the second lipid-linked intermediate involved in enterobacterial common antigen (ECA) synthesis. This is UDP-N-acetyl-D-mannosaminuronic acid transferase from Escherichia coli O157:H7.